Consider the following 480-residue polypeptide: Glutamate--tRNA ligase (480 aa).

A 'HIGH' region motif is present at residues 21–31 (PSPTGYLHVGG). Zn(2+) is bound by residues Cys-110, Cys-112, Cys-137, and His-139. Positions 248 to 252 (KLSKR) match the 'KMSKS' region motif. Residue Lys-251 coordinates ATP.

It belongs to the class-I aminoacyl-tRNA synthetase family. Glutamate--tRNA ligase type 1 subfamily. Monomer. It depends on Zn(2+) as a cofactor.

The protein resides in the cytoplasm. It catalyses the reaction tRNA(Glu) + L-glutamate + ATP = L-glutamyl-tRNA(Glu) + AMP + diphosphate. In terms of biological role, catalyzes the attachment of glutamate to tRNA(Glu) in a two-step reaction: glutamate is first activated by ATP to form Glu-AMP and then transferred to the acceptor end of tRNA(Glu). This chain is Glutamate--tRNA ligase, found in Actinobacillus succinogenes (strain ATCC 55618 / DSM 22257 / CCUG 43843 / 130Z).